Here is a 261-residue protein sequence, read N- to C-terminus: MPQNEYIEQHIKKHGRRLDYEERKRKKEAREGHRVAKDAQTLKGWRAKQFAKKRYAEKVAMKKKIKAHQESKVKGPSTPKAEDGEALPTYLLDRQTNNTAKAISSSIKQKRLEKADKFQVPLPKVKGISEEEMFKVIKTGKSKSKSWKRMITKHTFVGEGFTRRPVKMERIIRPAALRQKKANVTHPELGVTVFLPILGVKKNPQSPMYTQLGVLTKGTIIEVNVSELGLVTAGGKVVWGKYAQITNEPDRDGCVNAVLLV.

Residues 1-38 (MPQNEYIEQHIKKHGRRLDYEERKRKKEAREGHRVAKD) form a disordered region. Short sequence motifs (nuclear localization signal) lie at residues 11-18 (IKKHGRRL) and 51-58 (AKKRYAEK). A compositionally biased stretch (basic and acidic residues) spans 17 to 37 (RLDYEERKRKKEAREGHRVAK). The interval 59–85 (VAMKKKIKAHQESKVKGPSTPKAEDGE) is disordered.

It belongs to the eukaryotic ribosomal protein eS8 family. Ribosome biogenesis protein NSA2 subfamily. In terms of assembly, component of the pre-66S ribosomal particle. Interacts with NOP7 and RRP1. Interacts with RSA4 (via WD repeats).

The protein localises to the nucleus. Its subcellular location is the nucleolus. Involved in the biogenesis of the 60S ribosomal subunit. May play a part in the quality control of pre-60S particles. This is Ribosome biogenesis protein C3_06160C_A from Candida albicans (strain SC5314 / ATCC MYA-2876) (Yeast).